A 601-amino-acid chain; its full sequence is uncharacterized protein (601 aa).

The signal sequence occupies residues 1–24; the sequence is MKLSSLPSGLGLASLLGLISSATA.

The protein localises to the membrane. This is an uncharacterized protein from Schizosaccharomyces pombe (strain 972 / ATCC 24843) (Fission yeast).